A 259-amino-acid polypeptide reads, in one-letter code: Probable dihydroorotate dehydrogenase B (NAD(+)), electron transfer subunit (259 aa).

The 89-residue stretch at 1-89 (MLPLNATITQ…RGPFGKGFTL (89 aa)) folds into the FAD-binding FR-type domain. Residues Cys-211, Cys-216, Cys-219, and Cys-229 each coordinate [2Fe-2S] cluster.

Belongs to the PyrK family. As to quaternary structure, heterotetramer of 2 PyrK and 2 PyrD type B subunits. Requires [2Fe-2S] cluster as cofactor. It depends on FAD as a cofactor.

It participates in pyrimidine metabolism; UMP biosynthesis via de novo pathway; orotate from (S)-dihydroorotate (NAD(+) route): step 1/1. Responsible for channeling the electrons from the oxidation of dihydroorotate from the FMN redox center in the PyrD type B subunit to the ultimate electron acceptor NAD(+). This Methanosarcina mazei (strain ATCC BAA-159 / DSM 3647 / Goe1 / Go1 / JCM 11833 / OCM 88) (Methanosarcina frisia) protein is Probable dihydroorotate dehydrogenase B (NAD(+)), electron transfer subunit.